We begin with the raw amino-acid sequence, 249 residues long: MSLPSIPSFVLSGLLLICLPFSSFASATTSHISFSYAARQRMQNRARLLKQYQTHLKKQASYIVEGNAESKRALRQHNREQIKQHPEWFPAPLKASDRRWQALAENNHFLSSDHLHNITEVAIHRLEQQLGKPYVWGGTRPDKGFDCSGLVFYAYNKILEAKLPRTANEMYHYRRATIVANNDLRRGDLLFFHIHSREIADHMGVYLGDGQFIESPRTGETIRISRLAEPFWQDHFLGARRILTEETIL.

The signal sequence occupies residues 1-17 (MSLPSIPSFVLSGLLLI). Residue Cys18 is the site of N-palmitoyl cysteine attachment. The S-diacylglycerol cysteine moiety is linked to residue Cys18. The NlpC/P60 domain occupies 116–243 (HNITEVAIHR…DHFLGARRIL (128 aa)). Cys147 functions as the Nucleophile in the catalytic mechanism. His202 serves as the catalytic Proton acceptor. Residue Glu214 is part of the active site.

This sequence belongs to the peptidase C40 family.

The protein resides in the cell membrane. This Escherichia coli (strain K12) protein is Probable endopeptidase YafL (yafL).